The following is a 216-amino-acid chain: UDP-N-acetylglucosamine transferase subunit ALG14 (216 aa).

Residues 1 to 3 (MVC) lie on the Lumenal side of the membrane. The helical transmembrane segment at 4–24 (VLTLAASAGGLAVLLIVRLWA) threads the bilayer. The Cytoplasmic segment spans residues 25 to 216 (VLRSHPVTPR…PKSVYLGRIV (192 aa)).

This sequence belongs to the ALG14 family. Forms with ALG13 the active heterodimeric UDP-N-acetylglucosamine transferase complex.

The protein localises to the endoplasmic reticulum membrane. In terms of biological role, part of the UDP-N-acetylglucosamine transferase complex that operates in the biosynthetic pathway of dolichol-linked oligosaccharides, the glycan precursors employed in protein asparagine (N)-glycosylation. The assembly of dolichol-linked oligosaccharides begins on the cytosolic side of the endoplasmic reticulum membrane and finishes in its lumen. The sequential addition of sugars to dolichol pyrophosphate produces dolichol-linked oligosaccharides containing fourteen sugars, including two GlcNAcs, nine mannoses and three glucoses. Once assembled, the oligosaccharides are transferred from the lipid to nascent proteins by oligosaccharyltransferases. Functions as a protein-membrane adapter recruiting ALG13 at the cytoplasmic face of the endoplasmic reticulum, where the complex catalyzes the second step of dolichol pyrophosphate biosynthesis, transferring a beta1,4-linked N-acetylglucosamine (GlcNAc) from UDP-GlcNAc to GlcNAc-pyrophosphatedolichol (Gn-PDol) to produce N,N'-diacetylchitobiosyl diphosphodolichol. N,N'-diacetylchitobiosyl diphosphodolichol is a substrate for ALG1, the following enzyme in the biosynthetic pathway. This is UDP-N-acetylglucosamine transferase subunit ALG14 from Rattus norvegicus (Rat).